Reading from the N-terminus, the 384-residue chain is Chaperone protein DnaJ (384 aa).

Positions 5 to 70 (DYYEILGVTR…QKKRIYDTYG (66 aa)) constitute a J domain. A CR-type zinc finger spans residues 134 to 212 (GTEKEIRLQT…CNGQGRTRQS (79 aa)). 8 residues coordinate Zn(2+): cysteine 147, cysteine 150, cysteine 164, cysteine 167, cysteine 186, cysteine 189, cysteine 200, and cysteine 203. CXXCXGXG motif repeat units lie at residues 147–154 (CEECNGSG), 164–171 (CPVCQGSG), 186–193 (CTRCQGMG), and 200–207 (CKTCNGQG). The disordered stretch occupies residues 352 to 384 (KEKSGEKVRKWPWSKRKDREKKSMAESTREART).

The protein belongs to the DnaJ family. In terms of assembly, homodimer. Requires Zn(2+) as cofactor.

It is found in the cytoplasm. In terms of biological role, participates actively in the response to hyperosmotic and heat shock by preventing the aggregation of stress-denatured proteins and by disaggregating proteins, also in an autonomous, DnaK-independent fashion. Unfolded proteins bind initially to DnaJ; upon interaction with the DnaJ-bound protein, DnaK hydrolyzes its bound ATP, resulting in the formation of a stable complex. GrpE releases ADP from DnaK; ATP binding to DnaK triggers the release of the substrate protein, thus completing the reaction cycle. Several rounds of ATP-dependent interactions between DnaJ, DnaK and GrpE are required for fully efficient folding. Also involved, together with DnaK and GrpE, in the DNA replication of plasmids through activation of initiation proteins. The polypeptide is Chaperone protein DnaJ (Syntrophobacter fumaroxidans (strain DSM 10017 / MPOB)).